The following is a 376-amino-acid chain: 23S rRNA (uracil(747)-C(5))-methyltransferase RlmC (376 aa).

[4Fe-4S] cluster is bound by residues Cys3, Cys11, Cys14, and Cys87. The S-adenosyl-L-methionine site is built by Gln212, Phe241, Glu262, and Asn307. Cys334 acts as the Nucleophile in catalysis.

Belongs to the class I-like SAM-binding methyltransferase superfamily. RNA M5U methyltransferase family. RlmC subfamily.

The enzyme catalyses uridine(747) in 23S rRNA + S-adenosyl-L-methionine = 5-methyluridine(747) in 23S rRNA + S-adenosyl-L-homocysteine + H(+). Functionally, catalyzes the formation of 5-methyl-uridine at position 747 (m5U747) in 23S rRNA. The sequence is that of 23S rRNA (uracil(747)-C(5))-methyltransferase RlmC from Citrobacter koseri (strain ATCC BAA-895 / CDC 4225-83 / SGSC4696).